A 385-amino-acid chain; its full sequence is Period circadian protein (385 aa).

3 disordered regions span residues 28–121, 169–189, and 322–351; these read TAPV…VPPV, GPGP…WEGE, and SPAS…TSQG. The span at 71-93 shows a compositional bias: low complexity; that stretch reads SGNFTTGSNLHMSSVTNTSNAGT. Gly residues predominate over residues 94-115; it reads GTSGTGNSGDGGGGGAGDGPGS. The span at 340–351 shows a compositional bias: polar residues; the sequence is HPSSEQPSTSQG.

Forms a heterodimer with timeless (TIM); the complex then translocates into the nucleus. Post-translationally, phosphorylated with a circadian rhythmicity, probably by the double-time protein (dbt). Phosphorylation could be implicated in the stability of per monomer and in the formation of heterodimer per-tim.

It localises to the nucleus. The protein resides in the cytoplasm. It is found in the perinuclear region. Essential for biological clock functions. Determines the period length of circadian and ultradian rhythms; an increase in PER dosage leads to shortened circadian rhythms and a decrease leads to lengthened circadian rhythms. Essential for the circadian rhythmicity of locomotor activity, eclosion behavior, and for the rhythmic component of the male courtship song that originates in the thoracic nervous system. The biological cycle depends on the rhythmic formation and nuclear localization of the TIM-PER complex. Light induces the degradation of TIM, which promotes elimination of PER. Nuclear activity of the heterodimer coordinatively regulates PER and TIM transcription through a negative feedback loop. Behaves as a negative element in circadian transcriptional loop. Does not appear to bind DNA, suggesting indirect transcriptional inhibition. In Drosophila nebulosa (Fruit fly), this protein is Period circadian protein (per).